The sequence spans 248 residues: Gamma-interferon-inducible lysosomal thiol reductase (248 aa).

Positions 1–26 (MSWSPILPFLSLLLLLFPLEVPRAAT) are cleaved as a signal peptide. Residues 27-54 (ASLSQASSEGTTTCKAHDVCLLGPRPLP) constitute a propeptide, removed in mature form. Residues Cys69 and Cys72 are joined by a disulfide bond. 2 N-linked (GlcNAc...) asparagine glycosylation sites follow: Asn92 and Asn105. Residues 231–248 (KPDICSSIADSPRKVCYK) constitute a propeptide, removed in mature form.

This sequence belongs to the GILT family. As to quaternary structure, dimer; disulfide-linked. N-glycosylated. Sugar chains contain mannose-6-phosphate. Post-translationally, synthesized as a 35 kDa precursor which is then processed into the mature 30 kDa form via cleavage of N-terminal and C-terminal propeptides. Processing of the precursor is mediated by multiple lysosomal proteases.

It localises to the secreted. It is found in the lysosome. Lysosomal thiol reductase that can reduce protein disulfide bonds. May facilitate the complete unfolding of proteins destined for lysosomal degradation. Plays an important role in antigen processing. Facilitates the generation of MHC class II-restricted epitodes from disulfide bond-containing antigen by the endocytic reduction of disulfide bonds. Also facilitates MHC class I-restricted recognition of exogenous antigens containing disulfide bonds by CD8+ T-cells or crosspresentation. The protein is Gamma-interferon-inducible lysosomal thiol reductase (Ifi30) of Mus musculus (Mouse).